The following is a 7913-amino-acid chain: Nonribosomal peptide synthetase dtxS1 (7913 aa).

The interval 263 to 662 (FEQRSRAHPN…GRNDNQVKIR (400 aa)) is adenylation 1. Residues 789–865 (QPLSEVEKQV…NVAGQARRTT (77 aa)) enclose the Carrier 1 domain. Ser-826 carries the O-(pantetheine 4'-phosphoryl)serine modification. Residues 903 to 1171 (QDAFPCTSLQ…ITTVPVRIRL (269 aa)) form a condensation 1 region. Positions 1332 to 1740 (LETQAHSRPD…GRKDAQVKIR (409 aa)) are adenylation 2. The region spanning 1865 to 1941 (QPRTKLERQL…NLAQATGTQG (77 aa)) is the Carrier 2 domain. Residue Ser-1902 is modified to O-(pantetheine 4'-phosphoryl)serine. The interval 1965–2249 (PAQLSPIQRL…FSTIFPVRVS (285 aa)) is condensation 2. Positions 2863 to 3255 (LAQPHEPAIC…ARKDAQIKIR (393 aa)) are adenylation 3. In terms of domain architecture, Carrier 3 spans 3380-3456 (QPLSEAERKM…NVTHQAVAQL (77 aa)). Ser-3417 is modified (O-(pantetheine 4'-phosphoryl)serine). A condensation 3 region spans residues 3496–3761 (DAFPCTPLQE…FATLPLRVRL (266 aa)). Residues 3924-4321 (DRVRIHPNAP…GRKDDQVKLR (398 aa)) form an adenylation 4 region. Positions 4439–4450 (ELAQARTAQQGP) are enriched in polar residues. The interval 4439–4459 (ELAQARTAQQGPKRQPASEAE) is disordered. The region spanning 4453 to 4529 (QPASEAERQM…EAATQAQMLG (77 aa)) is the Carrier 4 domain. Ser-4490 is modified (O-(pantetheine 4'-phosphoryl)serine). Residues 4545-4837 (QSFAQARLWF…VNMQCLRVKI (293 aa)) form a condensation 4 region. The interval 5006–5405 (FRQQVAACAD…RRMDAQVKIR (400 aa)) is adenylation 5. The Carrier 5 domain maps to 5933–6009 (QPTSKTQRQL…DMAEGLPLAK (77 aa)). Ser-5970 is modified (O-(pantetheine 4'-phosphoryl)serine). Positions 6023 to 6315 (VEQSFAQRRL…VNMQCIRIRV (293 aa)) are condensation 5. The tract at residues 6481–6766 (FRQQALLNPD…IINAYGPTEN (286 aa)) is adenylation 6. The Carrier 6 domain maps to 7394–7470 (QPTTDMEREM…DLACHLSPEE (77 aa)). An O-(pantetheine 4'-phosphoryl)serine modification is found at Ser-7431. A condensation 6 region spans residues 7501–7771 (EDVLPLTSFQ…CLNIVPIRVN (271 aa)).

This sequence belongs to the NRP synthetase family.

It participates in secondary metabolite biosynthesis. In terms of biological role, nonribosomal peptide synthetase; part of the gene cluster that mediates the biosynthesis of destruxins, insecticidal cyclic hexadepsipeptides which induce flaccid paralysis and visceral muscle contraction in insects through targeting the calcium channels and vacuolar-type ATPases. The aldo-keto reductase dtxS3 converts alpha-ketoisocaproic acid from deaminated leucine into alpha-hydroxyisocaproic acid (HIC), which is the first substrate for destruxin assembly by dtxS1. L-aspartate decarboxylase dtxS4 converts aspartic acid into beta-alanine, the last substrate for the destruxin assembly line performed by dtxS1. The nonribosomal peptide synthetase dtxS1 synthesizes destruxins B and B2, whereas the cytochrome P450 monooxygenase dtxS2 is required to convert destruxin B into other destruxin derivatives, including destructins C, D, A and E. Destruxin E-diol (ED) is further produced in a non-enzymatic manner from destruxin E. Destruxins play an important role in virulence and escape from insect host immune defenses. This Metarhizium robertsii (strain ARSEF 23 / ATCC MYA-3075) (Metarhizium anisopliae (strain ARSEF 23)) protein is Nonribosomal peptide synthetase dtxS1.